The sequence spans 708 residues: Elongation factor G (708 aa).

The region spanning 8–290 (KRYRNIGISA…AVIQYLPAPM (283 aa)) is the tr-type G domain. GTP is bound by residues 17–24 (AHIDAGKT), 88–92 (DTPGH), and 142–145 (NKMD).

This sequence belongs to the TRAFAC class translation factor GTPase superfamily. Classic translation factor GTPase family. EF-G/EF-2 subfamily.

It localises to the cytoplasm. Functionally, catalyzes the GTP-dependent ribosomal translocation step during translation elongation. During this step, the ribosome changes from the pre-translocational (PRE) to the post-translocational (POST) state as the newly formed A-site-bound peptidyl-tRNA and P-site-bound deacylated tRNA move to the P and E sites, respectively. Catalyzes the coordinated movement of the two tRNA molecules, the mRNA and conformational changes in the ribosome. The protein is Elongation factor G of Psychrobacter arcticus (strain DSM 17307 / VKM B-2377 / 273-4).